The primary structure comprises 320 residues: Biotin synthase (320 aa).

Residues 45–274 (NDLQKASLLS…DSRIRLSAGR (230 aa)) enclose the Radical SAM core domain. [4Fe-4S] cluster-binding residues include cysteine 60, cysteine 64, and cysteine 67. Positions 105, 137, 197, and 269 each coordinate [2Fe-2S] cluster.

It belongs to the radical SAM superfamily. Biotin synthase family. Homodimer. [4Fe-4S] cluster is required as a cofactor. The cofactor is [2Fe-2S] cluster.

The catalysed reaction is (4R,5S)-dethiobiotin + (sulfur carrier)-SH + 2 reduced [2Fe-2S]-[ferredoxin] + 2 S-adenosyl-L-methionine = (sulfur carrier)-H + biotin + 2 5'-deoxyadenosine + 2 L-methionine + 2 oxidized [2Fe-2S]-[ferredoxin]. The protein operates within cofactor biosynthesis; biotin biosynthesis; biotin from 7,8-diaminononanoate: step 2/2. In terms of biological role, catalyzes the conversion of dethiobiotin (DTB) to biotin by the insertion of a sulfur atom into dethiobiotin via a radical-based mechanism. The sequence is that of Biotin synthase from Beijerinckia indica subsp. indica (strain ATCC 9039 / DSM 1715 / NCIMB 8712).